A 144-amino-acid chain; its full sequence is Transcription antitermination protein NusB (144 aa).

It belongs to the NusB family.

Involved in transcription antitermination. Required for transcription of ribosomal RNA (rRNA) genes. Binds specifically to the boxA antiterminator sequence of the ribosomal RNA (rrn) operons. The polypeptide is Transcription antitermination protein NusB (Haemophilus influenzae (strain 86-028NP)).